The primary structure comprises 501 residues: Probable cytosol aminopeptidase (501 aa).

Mn(2+) is bound by residues Lys-268 and Asp-273. Lys-280 is an active-site residue. Positions 291, 350, and 352 each coordinate Mn(2+). Arg-354 is an active-site residue.

Belongs to the peptidase M17 family. Mn(2+) serves as cofactor.

Its subcellular location is the cytoplasm. The catalysed reaction is Release of an N-terminal amino acid, Xaa-|-Yaa-, in which Xaa is preferably Leu, but may be other amino acids including Pro although not Arg or Lys, and Yaa may be Pro. Amino acid amides and methyl esters are also readily hydrolyzed, but rates on arylamides are exceedingly low.. It catalyses the reaction Release of an N-terminal amino acid, preferentially leucine, but not glutamic or aspartic acids.. Its function is as follows. Presumably involved in the processing and regular turnover of intracellular proteins. Catalyzes the removal of unsubstituted N-terminal amino acids from various peptides. This chain is Probable cytosol aminopeptidase, found in Idiomarina loihiensis (strain ATCC BAA-735 / DSM 15497 / L2-TR).